The chain runs to 261 residues: uncharacterized protein (261 aa).

The signal sequence occupies residues 1 to 22 (MGYLKKVGMCISLLIVIIFVTS). Residue C23 is the site of N-palmitoyl cysteine attachment. C23 carries S-diacylglycerol cysteine lipidation.

This sequence belongs to the staphylococcal tandem lipoprotein family.

It is found in the cell membrane. This is an uncharacterized protein from Staphylococcus aureus (strain bovine RF122 / ET3-1).